The following is a 127-amino-acid chain: Small ribosomal subunit protein uS13 (127 aa).

Positions His-92–Lys-127 are disordered. Residues Gln-101–Lys-127 are compositionally biased toward basic residues.

The protein belongs to the universal ribosomal protein uS13 family. Part of the 30S ribosomal subunit. Forms a loose heterodimer with protein S19. Forms two bridges to the 50S subunit in the 70S ribosome.

Its function is as follows. Located at the top of the head of the 30S subunit, it contacts several helices of the 16S rRNA. In the 70S ribosome it contacts the 23S rRNA (bridge B1a) and protein L5 of the 50S subunit (bridge B1b), connecting the 2 subunits; these bridges are implicated in subunit movement. Contacts the tRNAs in the A and P-sites. This is Small ribosomal subunit protein uS13 from Trichodesmium erythraeum (strain IMS101).